The primary structure comprises 187 residues: Elongation factor P (187 aa).

Belongs to the elongation factor P family.

It localises to the cytoplasm. Its pathway is protein biosynthesis; polypeptide chain elongation. In terms of biological role, involved in peptide bond synthesis. Stimulates efficient translation and peptide-bond synthesis on native or reconstituted 70S ribosomes in vitro. Probably functions indirectly by altering the affinity of the ribosome for aminoacyl-tRNA, thus increasing their reactivity as acceptors for peptidyl transferase. The chain is Elongation factor P from Magnetococcus marinus (strain ATCC BAA-1437 / JCM 17883 / MC-1).